Here is a 372-residue protein sequence, read N- to C-terminus: Aminomethyltransferase (372 aa).

It belongs to the GcvT family. The glycine cleavage system is composed of four proteins: P, T, L and H.

The enzyme catalyses N(6)-[(R)-S(8)-aminomethyldihydrolipoyl]-L-lysyl-[protein] + (6S)-5,6,7,8-tetrahydrofolate = N(6)-[(R)-dihydrolipoyl]-L-lysyl-[protein] + (6R)-5,10-methylene-5,6,7,8-tetrahydrofolate + NH4(+). Its function is as follows. The glycine cleavage system catalyzes the degradation of glycine. The protein is Aminomethyltransferase of Synechocystis sp. (strain ATCC 27184 / PCC 6803 / Kazusa).